Here is a 394-residue protein sequence, read N- to C-terminus: Protein STRICTOSIDINE SYNTHASE-LIKE 1 (394 aa).

The N-terminal stretch at 1-21 (MESLLLIAYAFLYLFLLSHEA) is a signal peptide. Basic and acidic residues predominate over residues 61–73 (GLEKRPNHSEDNP). The segment at 61-92 (GLEKRPNHSEDNPPSRGWTGEPGLDPRGEGPY) is disordered. Asn-67, Asn-122, and Asn-196 each carry an N-linked (GlcNAc...) asparagine glycan.

The protein belongs to the strictosidine synthase family.

The protein localises to the vacuole. In Arabidopsis thaliana (Mouse-ear cress), this protein is Protein STRICTOSIDINE SYNTHASE-LIKE 1.